Reading from the N-terminus, the 876-residue chain is MDPAPSLGCSLKDVKWSSVAVPLDLLVSTYRLPQIARLDNGECVEGLRENDYLLIHSCRQWTTITAHSLEEGHYVIGPKIEIPVHYAGQFKLLEQDRDIKEPVQYFNSVEEVAKAFPERVYVMEDITFNVKVASGECNEDTEVYNITLCTGDELTLMGQAEILYAKTFKEKSRLNTIFKKIGKLNSISKLGKGKMPCLICMNHRTNESISLPFQCKGRFSTRSPLELQMQEGEHTIRNIVEKTRLPVNVTVPSPPPRNPYDLHFIREGHRYKFVNIQTKTVVVCCVLRNNKILPMHFPLHLTVPKFSLPEHLVKGESWPETLVHHWLGICQEQFDIDEYSRAVRDVKTDWNEECKSPKKGRCSGHNHVPNSLSYARDELTQSFHRLSVCVYGNNLHGNSEVNLHGCRDLGGDWAPFPHDILPYQDSGDSGSDYLFPEASEESAGIPGKSELPYEELWLEEGKPSHQPLTRSLSEKNRCDQFRGSVRSKCATSPLPIPGTLGAAVKSSDTALPPPPVPPKSEAVREECRLLNAPPVPPRSAKPLSTSPSIPPRTVKPARQQTRSPSPTLSYYSSGLHNISVTKTDTNPSESTPVSCYPCNRVKTDSVDLKSPFGSPSAEAVSSRLSWPNHYSGASESQTRSDFLLDPSRSYSYPRQKTPGTPKRNCPAPFDFDGCELLASPTSPVTAEFSSSVSGCPKSASYSLESTDVKSLAAGVTKQSTSCPALPPRAPKLVEEKVASETSPLPLKIDGAEEDPKSGSPDLSEDQYFVKKGMQDIFSASYPFSSPLHLQLAPRSCGDGSPWQPPADLSGLSIEEVSKSLRFIGLSEDVISFFVTEKIDGNLLVQLTEEILSEDFKLSKLQVKKIMQFINGWRPKI.

The segment at 12–320 is CABIT; that stretch reads KDVKWSSVAV…HLVKGESWPE (309 aa). 2 positions are modified to phosphotyrosine: Tyr-105 and Tyr-453. The tract at residues 496-572 is disordered; it reads IPGTLGAAVK…SPSPTLSYYS (77 aa). The segment at 498 to 550 is necessary for interaction with GRB2; that stretch reads GTLGAAVKSSDTALPPPPVPPKSEAVREECRLLNAPPVPPRSAKPLSTSPSIP. Polar residues predominate over residues 558 to 572; that stretch reads RQQTRSPSPTLSYYS. Residues Ser-610 and Ser-614 each carry the phosphoserine modification. Disordered regions lie at residues 626-664 and 738-763; these read WPNHYSGASESQTRSDFLLDPSRSYSYPRQKTPGTPKRN and ASETSPLPLKIDGAEEDPKSGSPDLS. 2 stretches are compositionally biased toward polar residues: residues 631 to 640 and 648 to 658; these read SGASESQTRS and RSYSYPRQKTP. An SAM domain is found at 811 to 876; the sequence is LSIEEVSKSL…QFINGWRPKI (66 aa).

This sequence belongs to the GAREM family. In terms of assembly, isoform 1 interacts with EGFR. Isoform 1 interacts (via proline-rich domain and phosphorylated at Tyr-105 and Tyr-453) with GRB2 (via SH3 domains); the interaction occurs upon EGF stimulation. Isoform 1 interacts (phosphorylated at Tyr-453) with PTPN11; the interaction increases MAPK/ERK activity and does not affect the GRB2/SOS complex formation. Isoform 2 does not interact with GRB2. In terms of processing, on EGF stimulation, phosphorylated on Tyr-105 and Tyr-453. As to expression, isoform 1 is ubiquitously expressed.

Functionally, acts as an adapter protein that plays a role in intracellular signaling cascades triggered either by the cell surface activated epidermal growth factor receptor and/or cytoplasmic protein tyrosine kinases. Promotes activation of the MAPK/ERK signaling pathway. Plays a role in the regulation of cell proliferation. This chain is GRB2-associated and regulator of MAPK protein 1 (GAREM1), found in Homo sapiens (Human).